An 821-amino-acid chain; its full sequence is Integrator complex assembly factor BRAT1 (821 aa).

The required for interaction with NDFIP1 stretch occupies residues 100-200 (PGLFGEPGPL…WPACAQKIMD (101 aa)). HEAT repeat units lie at residues 495-531 (PQFL…SRHW) and 544-576 (SEVP…SSQG). Residues 741–767 (GSPNTASAEATLPRWRAGEQAQPPGDQ) form a disordered region. At S742 the chain carries Phosphoserine. A BRAT1-like motif motif is present at residues 819-821 (DCY). C820 contributes to the Zn(2+) binding site.

This sequence belongs to the BRAT1 family. As to quaternary structure, part of the multiprotein complex composed of BRAT1, WDR73, as well as integrator complex subunits INTS9 and INTS11. Interacts with BRCA1 and ATM. Interacts with MTOR and RPTOR. Interacts with NDFIP1. Interacts with SMC1A and PRKDC. In terms of processing, ubiquitinated by NEDD4, NEDD4L and ITCH; mono- and polyubiquitinated forms are detected. Ubiquitously expressed.

It localises to the nucleus. The protein localises to the cytoplasm. Component of a multiprotein complex required for the assembly of the RNA endonuclease module of the integrator complex. Associates with INTS9 and INTS11 in the cytoplasm and blocks the active site of INTS11 to inhibit the endonuclease activity of INTS11 before formation of the full integrator complex. Following dissociation of WDR73 of the complex, BRAT1 facilitates the nuclear import of the INTS9-INTS11 heterodimer. In the nucleus, INTS4 is integrated to the INTS9-INTS11 heterodimer and BRAT1 is released from the mature RNA endonuclease module by inositol hexakisphosphate (InsP6). BRAT1 is also involved in DNA damage response; activates kinases ATM, SMC1A and PRKDC by modulating their phosphorylation status following ionizing radiation (IR) stress. Plays a role in regulating mitochondrial function and cell proliferation. Required for protein stability of MTOR and MTOR-related proteins, and cell cycle progress by growth factors. In Homo sapiens (Human), this protein is Integrator complex assembly factor BRAT1.